A 126-amino-acid chain; its full sequence is Aspartate 1-decarboxylase (126 aa).

The active-site Schiff-base intermediate with substrate; via pyruvic acid is the S25. S25 is subject to Pyruvic acid (Ser). Residue T57 coordinates substrate. Y58 serves as the catalytic Proton donor. 73–75 contacts substrate; that stretch reads GGA.

This sequence belongs to the PanD family. In terms of assembly, heterooctamer of four alpha and four beta subunits. It depends on pyruvate as a cofactor. Is synthesized initially as an inactive proenzyme, which is activated by self-cleavage at a specific serine bond to produce a beta-subunit with a hydroxyl group at its C-terminus and an alpha-subunit with a pyruvoyl group at its N-terminus.

It is found in the cytoplasm. The catalysed reaction is L-aspartate + H(+) = beta-alanine + CO2. It participates in cofactor biosynthesis; (R)-pantothenate biosynthesis; beta-alanine from L-aspartate: step 1/1. Functionally, catalyzes the pyruvoyl-dependent decarboxylation of aspartate to produce beta-alanine. In Xylella fastidiosa (strain Temecula1 / ATCC 700964), this protein is Aspartate 1-decarboxylase.